We begin with the raw amino-acid sequence, 351 residues long: Photosystem II D2 protein (351 aa).

The chain crosses the membrane as a helical span at residues 39–59; it reads TAYLAIGGWLTGTTFVTSWYT. Residue H116 participates in chlorophyll a binding. Residues 123–139 form a helical membrane-spanning segment; that stretch reads GFMLRQFEIARLVGIRP. Positions 128 and 141 each coordinate pheophytin a. A helical transmembrane segment spans residues 151 to 164; sequence VFVSVFLMYPLGQS. H196 serves as a coordination point for chlorophyll a. Residues 206-226 traverse the membrane as a helical segment; the sequence is GALLCAIHGATVENTLFEDGE. A plastoquinone-binding residues include H213 and F260. H213 is a Fe cation binding site. Residue H267 coordinates Fe cation. Residues 277 to 293 traverse the membrane as a helical segment; the sequence is GLWTSSIGIIGLALNLR.

This sequence belongs to the reaction center PufL/M/PsbA/D family. PSII is composed of 1 copy each of membrane proteins PsbA, PsbB, PsbC, PsbD, PsbE, PsbF, PsbH, PsbI, PsbJ, PsbK, PsbL, PsbM, PsbT, PsbX, PsbY, PsbZ, Psb30/Ycf12, peripheral proteins PsbO, CyanoQ (PsbQ), PsbU, PsbV and a large number of cofactors. It forms dimeric complexes. The cofactor is The D1/D2 heterodimer binds P680, chlorophylls that are the primary electron donor of PSII, and subsequent electron acceptors. It shares a non-heme iron and each subunit binds pheophytin, quinone, additional chlorophylls, carotenoids and lipids. There is also a Cl(-1) ion associated with D1 and D2, which is required for oxygen evolution. The PSII complex binds additional chlorophylls, carotenoids and specific lipids..

It is found in the cellular thylakoid membrane. It carries out the reaction 2 a plastoquinone + 4 hnu + 2 H2O = 2 a plastoquinol + O2. Its function is as follows. Photosystem II (PSII) is a light-driven water:plastoquinone oxidoreductase that uses light energy to abstract electrons from H(2)O, generating O(2) and a proton gradient subsequently used for ATP formation. It consists of a core antenna complex that captures photons, and an electron transfer chain that converts photonic excitation into a charge separation. The D1/D2 (PsbA/PsbD) reaction center heterodimer binds P680, the primary electron donor of PSII as well as several subsequent electron acceptors. D2 is needed for assembly of a stable PSII complex. The protein is Photosystem II D2 protein of Synechococcus sp. (strain CC9605).